Consider the following 370-residue polypeptide: Protein STRICTOSIDINE SYNTHASE-LIKE 9 (370 aa).

Positions methionine 1–glutamine 26 are cleaved as a signal peptide. Residues asparagine 97 and asparagine 171 are each glycosylated (N-linked (GlcNAc...) asparagine).

The protein belongs to the strictosidine synthase family.

The protein resides in the vacuole. This chain is Protein STRICTOSIDINE SYNTHASE-LIKE 9, found in Arabidopsis thaliana (Mouse-ear cress).